Here is a 692-residue protein sequence, read N- to C-terminus: Elongation factor G (692 aa).

The tr-type G domain occupies 8 to 283; the sequence is NRIRNIGIAA…AVIDYLPAPT (276 aa). GTP contacts are provided by residues 17–24, 81–85, and 135–138; these read AHIDAGKT, DTPGH, and NKMD.

The protein belongs to the TRAFAC class translation factor GTPase superfamily. Classic translation factor GTPase family. EF-G/EF-2 subfamily.

It localises to the cytoplasm. Functionally, catalyzes the GTP-dependent ribosomal translocation step during translation elongation. During this step, the ribosome changes from the pre-translocational (PRE) to the post-translocational (POST) state as the newly formed A-site-bound peptidyl-tRNA and P-site-bound deacylated tRNA move to the P and E sites, respectively. Catalyzes the coordinated movement of the two tRNA molecules, the mRNA and conformational changes in the ribosome. The sequence is that of Elongation factor G from Helicobacter pylori (strain P12).